Reading from the N-terminus, the 1790-residue chain is Cytokinesis protein sepA (1790 aa).

Disordered regions lie at residues 1–275 (MPTS…YLTR) and 328–350 (GEQK…GILE). Residues 24 to 35 (ERPVEDRWDAHG) show a composition bias toward basic and acidic residues. 2 stretches are compositionally biased toward low complexity: residues 39–62 (SLAP…SIQS) and 187–203 (SHHS…SRMS). Positions 205 to 236 (DQASIHSSLSSNTRGSSYISTDGSSRTTLPSH) are enriched in polar residues. Residues 274 to 702 (TRPRDDRVVD…YVAMDRRLPD (429 aa)) enclose the GBD/FH3 domain. Residues 328-341 (GEQKRKQKARETHG) show a composition bias toward basic and acidic residues. Positions 724 to 811 (AEARRAYDES…QRNELETREL (88 aa)) form a coiled coil. In terms of domain architecture, FH1 spans 955 to 1136 (DPEQATGLLG…NYLASQGAPS (182 aa)). Residues 975–986 (ADDAKDEGKPTE) show a composition bias toward basic and acidic residues. Disordered stretches follow at residues 975–1119 (ADDA…PPGT), 1465–1484 (NLSD…ITQR), and 1596–1790 (RAAA…PSTS). 2 stretches are compositionally biased toward pro residues: residues 1015–1026 (APPPPPPPPPAH) and 1033–1118 (APPP…PPPG). Residues 1141-1564 (VMSSIRPKKK…TEASLARKRI (424 aa)) enclose the FH2 domain. Residues 1435 to 1566 (LQKLNVDQLR…ASLARKRINV (132 aa)) are a coiled coil. Positions 1581-1613 (SPATSGAMDSLLEKLRAAAPQAKDQRDRRRRAR) constitute a DAD domain. Basic residues predominate over residues 1608–1620 (RRRRARLKERHQV). A compositionally biased stretch (polar residues) spans 1644–1661 (SGATDTNATDSSLLSPTI). Residues 1694 to 1710 (PDPERTRRRRESAEEER) are compositionally biased toward basic and acidic residues. A compositionally biased stretch (polar residues) spans 1720 to 1746 (GATSGSKDSNDTTPLSPVTEPTSTQGE).

It belongs to the formin homology family. BNI1 subfamily.

In terms of biological role, involved in cytokinesis. Overexpression results in growth inhibition. This Emericella nidulans (strain FGSC A4 / ATCC 38163 / CBS 112.46 / NRRL 194 / M139) (Aspergillus nidulans) protein is Cytokinesis protein sepA (sepA).